A 543-amino-acid polypeptide reads, in one-letter code: Chaperonin GroEL (543 aa).

ATP-binding positions include 29-32 (TLGP), 86-90 (DGTTT), Gly413, 477-479 (DAL), and Asp493.

Belongs to the chaperonin (HSP60) family. Forms a cylinder of 14 subunits composed of two heptameric rings stacked back-to-back. Interacts with the co-chaperonin GroES.

The protein localises to the cytoplasm. It carries out the reaction ATP + H2O + a folded polypeptide = ADP + phosphate + an unfolded polypeptide.. In terms of biological role, together with its co-chaperonin GroES, plays an essential role in assisting protein folding. The GroEL-GroES system forms a nano-cage that allows encapsulation of the non-native substrate proteins and provides a physical environment optimized to promote and accelerate protein folding. The sequence is that of Chaperonin GroEL from Clostridium novyi (strain NT).